We begin with the raw amino-acid sequence, 59 residues long: MSKTIKVTQTKSSIGRLPKHILCLKGLGLRRINHTVEVEDTPCTRGMINKVYYMVKVEE.

Belongs to the universal ribosomal protein uL30 family. As to quaternary structure, part of the 50S ribosomal subunit.

The protein is Large ribosomal subunit protein uL30 of Aliivibrio fischeri (strain MJ11) (Vibrio fischeri).